A 254-amino-acid chain; its full sequence is UstYa family oxidase phomYc' (254 aa).

The helical transmembrane segment at 38–58 threads the bilayer; the sequence is LVLVLQSVLIISLLASLHILG. Residue N64 is glycosylated (N-linked (GlcNAc...) asparagine). An HXXHC 1 motif is present at residues 138-142; sequence HQLHC. A glycan (N-linked (GlcNAc...) asparagine) is linked at N159. An HXXHC 2 motif is present at residues 173–177; that stretch reads HIDHC.

It belongs to the ustYa family.

It is found in the membrane. It participates in mycotoxin biosynthesis. UstYa family oxidase; part of the gene cluster that mediates the biosynthesis of the phomopsins, a group of hexapeptide mycotoxins which infects lupins and causes lupinosis disease in livestock. Within the pathway, phomYc' catalyzes the desaturation of the Ile moiety into 2,3-dehydroisoleucine (dIle). The pathway starts with the processing of the precursor phomA' by several endopeptidases including kexin proteases as well as the cluster-specific S41 family peptidase phomP1 and the oligopeptidase phomG' to produce 10 identical copies of the hexapeptide Tyr-Val-Ile-Pro-Ile-Asp. After being excised from the precursor peptide, the core peptides are cyclized and modified post-translationally by enzymes encoded within the gene cluster. The timing and order of proteolysis of the phomA' precursor and PTMs are still unknown. Two tyrosinase-like enzymes, phomQ1' and phomQ2, catalyze the chlorination and hydroxylation of Tyr, respectively. PhomYb, is proposed to be involved in the construction of the macrocyclic structure. The other 4 ustYa family proteins may be involved in PTMs that generate the unique structure of phomopsin A. PhomYa' is required for the hydroxylation of C-beta of Tyr. PhomYc', phomYd', and phomYe are responsible for the biosynthesis of 2,3-dehydroisoleucine (dIle), 2,3-dehydroaspartic acid (dAsp), and 3,4-dehydroproline (dPro), respectively. While dIle formation by phomYc' is indispensable for the installation of dAsp by phomYd', the order of the other PTMs have not been elucidated yet. Most of the biosynthetic enzymes likely have broad substrate specificity, and thus, there might be a metabolic grid from a precursor to phomopsin A. The enzyme(s) responsible for the biosynthesis of 3,4-dehydrovaline (dVal) have also not been identified yet. Finally, phomM' acts as an S-adenosylmethionine-dependent alpha-N-methyltransferase that catalyzes two successive N-methylation reactions, converting N-desmethyl-phomopsin A to phomopsin A and phomopsin A further to an N,N-dimethylated congener called phomopsin E. This Diaporthe leptostromiformis (Lupinosis disease fungus) protein is UstYa family oxidase phomYc'.